A 173-amino-acid chain; its full sequence is NADH-ubiquinone oxidoreductase chain 6 (173 aa).

5 helical membrane-spanning segments follow: residues 1–21 (MTYF…AVAS), 27–47 (YGVV…LSLG), 48–68 (ASFV…VVFV), 87–107 (VIGY…ISGF), and 139–159 (WGVG…FVVL).

Belongs to the complex I subunit 6 family.

Its subcellular location is the mitochondrion membrane. The enzyme catalyses a ubiquinone + NADH + 5 H(+)(in) = a ubiquinol + NAD(+) + 4 H(+)(out). Core subunit of the mitochondrial membrane respiratory chain NADH dehydrogenase (Complex I) that is believed to belong to the minimal assembly required for catalysis. Complex I functions in the transfer of electrons from NADH to the respiratory chain. The immediate electron acceptor for the enzyme is believed to be ubiquinone. This Brachyramphus marmoratus (Marbled murrelet) protein is NADH-ubiquinone oxidoreductase chain 6 (MT-ND6).